A 1771-amino-acid polypeptide reads, in one-letter code: Replicase polyprotein (1771 aa).

A coiled-coil region spans residues methionine 1–glutamine 29. The interval serine 16–leucine 25 is BC-box. The tract at residues proline 106 to phenylalanine 114 is interaction with and inhibition of host AGO2. Positions alanine 482–alanine 656 constitute an SF3 helicase domain. Glycine 510–threonine 517 is an ATP binding site. The tract at residues valine 919 to glutamate 942 is disordered. Positions aspartate 954–isoleucine 1201 constitute a Peptidase C3 domain. Residues histidine 1003, aspartate 1063, and cysteine 1162 each act as for picornain 3C-like protease activity in the active site. Residues glycine 1385–isoleucine 1413 are a coiled coil. Residues asparagine 1495–phenylalanine 1634 form the RdRp catalytic domain.

As to quaternary structure, interacts with host AGO2; this interaction leads to AGO2 degradation via an E3 ubiquitin ligase-dependent pathway and may block the RNA-induced silencing complexes (RISC) activity. Might be expressed through a ribosomal skip from one codon to the next without formation of a peptide bond.

It localises to the host cytoplasm. The protein resides in the host perinuclear region. It catalyses the reaction RNA(n) + a ribonucleoside 5'-triphosphate = RNA(n+1) + diphosphate. Suppressor of RNA-mediated gene silencing, an antiviral defense mechanism of insect cells. Inhibits siRNA function through the direct enzymatic inactivation of host AGO2, but does not interfere with miRNA pathway. Facilitates viral replication via the recruitment of a cellular ubiquitin ligase complex that promotes host AGO2 degradation. Inhibits the integrated stress response (ISR) in the infected cell possiby by degrading host Nup358. Stress granule formation is thus inhibited, which allows protein synthesis and viral replication. Does not bind to dsRNA or siRNA. In terms of biological role, replicates the genomic and antigenomic RNA. This is Replicase polyprotein from Teleogryllus oceanicus (black field cricket).